The primary structure comprises 69 residues: DNA-directed RNA polymerase subunit omega (69 aa).

Belongs to the RNA polymerase subunit omega family. In terms of assembly, the RNAP catalytic core consists of 2 alpha, 1 beta, 1 beta' and 1 omega subunit. When a sigma factor is associated with the core the holoenzyme is formed, which can initiate transcription.

It carries out the reaction RNA(n) + a ribonucleoside 5'-triphosphate = RNA(n+1) + diphosphate. Functionally, promotes RNA polymerase assembly. Latches the N- and C-terminal regions of the beta' subunit thereby facilitating its interaction with the beta and alpha subunits. The polypeptide is DNA-directed RNA polymerase subunit omega (Pediococcus pentosaceus (strain ATCC 25745 / CCUG 21536 / LMG 10740 / 183-1w)).